The primary structure comprises 119 residues: Large ribosomal subunit protein bL19 (119 aa).

The protein belongs to the bacterial ribosomal protein bL19 family.

This protein is located at the 30S-50S ribosomal subunit interface and may play a role in the structure and function of the aminoacyl-tRNA binding site. This is Large ribosomal subunit protein bL19 from Treponema denticola (strain ATCC 35405 / DSM 14222 / CIP 103919 / JCM 8153 / KCTC 15104).